The primary structure comprises 526 residues: NAD(P)H-quinone oxidoreductase chain 4 1 (526 aa).

A run of 14 helical transmembrane segments spans residues 7–27 (FPWLSALVLLPLLAAFGIPLL), 35–55 (WYALAVGALDLGLMAYIFGWH), 86–106 (LSFPLVLLSGLITTLAIVAAW), 114–134 (LFFFLLLLMYGAQVGVFLAQD), 135–155 (LLLFFLMWEIELVPVYLLIAI), 168–188 (FILYTAAASIFILVGSLAMAF), 208–228 (ALQILAYAAFLIAFGVKLPVF), 242–262 (SAPISMILAGVLLKMGGYGLI), 276–296 (FAPVLAVLGAVNIVYGALAAL), 310–330 (IAHMGFVLIGIAAFTELGLNG), 331–351 (ALLQMISHGLIAAVLFFLTGI), 374–396 (AFALFTAGSLASLALPGMSGFVG), 417–437 (GIALLAAVGIILTPIYLLSML), and 463–483 (MAVALCLLLPILGIGLYPRLA).

The protein belongs to the complex I subunit 4 family.

The protein localises to the cellular thylakoid membrane. It carries out the reaction a plastoquinone + NADH + (n+1) H(+)(in) = a plastoquinol + NAD(+) + n H(+)(out). The catalysed reaction is a plastoquinone + NADPH + (n+1) H(+)(in) = a plastoquinol + NADP(+) + n H(+)(out). In terms of biological role, NDH-1 shuttles electrons from NAD(P)H, via FMN and iron-sulfur (Fe-S) centers, to quinones in the respiratory chain. The immediate electron acceptor for the enzyme in this species is believed to be plastoquinone. Couples the redox reaction to proton translocation (for every two electrons transferred, four hydrogen ions are translocated across the cytoplasmic membrane), and thus conserves the redox energy in a proton gradient. The chain is NAD(P)H-quinone oxidoreductase chain 4 1 from Synechococcus sp. (strain JA-3-3Ab) (Cyanobacteria bacterium Yellowstone A-Prime).